Consider the following 321-residue polypeptide: Eukaryotic translation initiation factor 3 subunit I (321 aa).

WD repeat units lie at residues 8 to 47 (GHER…RLGT), 50 to 89 (GHGG…TLSK), 140 to 179 (VDNS…KLIS), 182 to 221 (EHSK…HLKT), and 279 to 318 (GHFG…DDIE).

It belongs to the eIF-3 subunit I family. Component of the eukaryotic translation initiation factor 3 (eIF-3) complex.

It is found in the cytoplasm. Its function is as follows. Component of the eukaryotic translation initiation factor 3 (eIF-3) complex, which is involved in protein synthesis of a specialized repertoire of mRNAs and, together with other initiation factors, stimulates binding of mRNA and methionyl-tRNAi to the 40S ribosome. The eIF-3 complex specifically targets and initiates translation of a subset of mRNAs involved in cell proliferation. In Nematostella vectensis (Starlet sea anemone), this protein is Eukaryotic translation initiation factor 3 subunit I.